Reading from the N-terminus, the 173-residue chain is RxLR effector protein PITG_10232 (173 aa).

An N-terminal signal peptide occupies residues 1–24 (MRLGYLIVGCAVALLATTDGVVDA). A disordered region spans residues 25–64 (SSKHKQLSTDVPRPADDISSERFLRSQDTPEDDGNPAHED). Over residues 37–49 (RPADDISSERFLR) the composition is skewed to basic and acidic residues. Residues 46–65 (RFLRSQDTPEDDGNPAHEDR) carry the RxLR-dEER motif.

It belongs to the RxLR effector family.

The protein localises to the secreted. It localises to the host nucleus. The protein resides in the host cytoplasm. In terms of biological role, effector that leads to host programmed cell death. This is RxLR effector protein PITG_10232 from Phytophthora infestans (strain T30-4) (Potato late blight agent).